The chain runs to 234 residues: NAD-dependent protein deacylase (234 aa).

A Deacetylase sirtuin-type domain is found at 1-234; that stretch reads MKNLVILSGA…IEMASQEMLK (234 aa). Residue 9-28 participates in NAD(+) binding; sequence GAGISAESGIKTFRDAGGLW. Residues Tyr53 and Arg56 each contribute to the substrate site. 86–89 lines the NAD(+) pocket; the sequence is QNVD. Catalysis depends on His104, which acts as the Proton acceptor. Residues 169–171 and Met217 each bind NAD(+); that span reads GTS.

This sequence belongs to the sirtuin family. Class III subfamily.

The protein localises to the cytoplasm. It catalyses the reaction N(6)-acetyl-L-lysyl-[protein] + NAD(+) + H2O = 2''-O-acetyl-ADP-D-ribose + nicotinamide + L-lysyl-[protein]. The catalysed reaction is N(6)-succinyl-L-lysyl-[protein] + NAD(+) + H2O = 2''-O-succinyl-ADP-D-ribose + nicotinamide + L-lysyl-[protein]. In terms of biological role, NAD-dependent lysine deacetylase and desuccinylase that specifically removes acetyl and succinyl groups on target proteins. Modulates the activities of several proteins which are inactive in their acylated form. The chain is NAD-dependent protein deacylase from Helicobacter pylori (strain J99 / ATCC 700824) (Campylobacter pylori J99).